A 287-amino-acid polypeptide reads, in one-letter code: Homoserine kinase (287 aa).

78–88 (PLAHGLGSSSS) contributes to the ATP binding site.

This sequence belongs to the GHMP kinase family. Homoserine kinase subfamily.

Its subcellular location is the cytoplasm. The enzyme catalyses L-homoserine + ATP = O-phospho-L-homoserine + ADP + H(+). It functions in the pathway amino-acid biosynthesis; L-threonine biosynthesis; L-threonine from L-aspartate: step 4/5. Its function is as follows. Catalyzes the ATP-dependent phosphorylation of L-homoserine to L-homoserine phosphate. The polypeptide is Homoserine kinase (Lactobacillus acidophilus (strain ATCC 700396 / NCK56 / N2 / NCFM)).